A 364-amino-acid chain; its full sequence is Fructose-bisphosphate aldolase C (364 aa).

Y5 is subject to Phosphotyrosine. Residues S36, S39, and S45 each carry the phosphoserine modification. R56 provides a ligand contact to substrate. Residue K111 is modified to N6-acetyllysine. Position 132 is a phosphoserine (S132). Residue K147 participates in substrate binding. The Proton acceptor role is filled by E188. K230 (schiff-base intermediate with dihydroxyacetone-P) is an active-site residue.

The protein belongs to the class I fructose-bisphosphate aldolase family. In terms of assembly, homotetramer. Interacts with ATP6V1E1.

It carries out the reaction beta-D-fructose 1,6-bisphosphate = D-glyceraldehyde 3-phosphate + dihydroxyacetone phosphate. The protein operates within carbohydrate degradation; glycolysis; D-glyceraldehyde 3-phosphate and glycerone phosphate from D-glucose: step 4/4. The chain is Fructose-bisphosphate aldolase C (ALDOC) from Pan troglodytes (Chimpanzee).